The chain runs to 153 residues: Allergen Pet c 1 (153 aa).

The protein belongs to the BetVI family. In terms of assembly, may form dimers.

In Petroselinum crispum (Parsley), this protein is Allergen Pet c 1.